A 99-amino-acid polypeptide reads, in one-letter code: NADH-quinone oxidoreductase subunit K (99 aa).

The next 3 membrane-spanning stretches (helical) occupy residues 3–23 (PDNYLYLSALLFTIGAAGVLL), 28–48 (IVMFMCVELMLNAGNLAFVTF), and 59–79 (VVAFFTMVVAACEVVIGLAII).

This sequence belongs to the complex I subunit 4L family. NDH-1 is composed of 14 different subunits. Subunits NuoA, H, J, K, L, M, N constitute the membrane sector of the complex.

The protein localises to the cell membrane. The catalysed reaction is a quinone + NADH + 5 H(+)(in) = a quinol + NAD(+) + 4 H(+)(out). Functionally, NDH-1 shuttles electrons from NADH, via FMN and iron-sulfur (Fe-S) centers, to quinones in the respiratory chain. The immediate electron acceptor for the enzyme in this species is believed to be a menaquinone. Couples the redox reaction to proton translocation (for every two electrons transferred, four hydrogen ions are translocated across the cytoplasmic membrane), and thus conserves the redox energy in a proton gradient. The polypeptide is NADH-quinone oxidoreductase subunit K (Mycolicibacterium gilvum (strain PYR-GCK) (Mycobacterium gilvum (strain PYR-GCK))).